The primary structure comprises 244 residues: 1-(5-phosphoribosyl)-5-[(5-phosphoribosylamino)methylideneamino] imidazole-4-carboxamide isomerase (244 aa).

The active-site Proton acceptor is the Asp-8. Asp-130 acts as the Proton donor in catalysis.

This sequence belongs to the HisA/HisF family.

The protein localises to the cytoplasm. It carries out the reaction 1-(5-phospho-beta-D-ribosyl)-5-[(5-phospho-beta-D-ribosylamino)methylideneamino]imidazole-4-carboxamide = 5-[(5-phospho-1-deoxy-D-ribulos-1-ylimino)methylamino]-1-(5-phospho-beta-D-ribosyl)imidazole-4-carboxamide. Its pathway is amino-acid biosynthesis; L-histidine biosynthesis; L-histidine from 5-phospho-alpha-D-ribose 1-diphosphate: step 4/9. The protein is 1-(5-phosphoribosyl)-5-[(5-phosphoribosylamino)methylideneamino] imidazole-4-carboxamide isomerase of Hahella chejuensis (strain KCTC 2396).